A 623-amino-acid polypeptide reads, in one-letter code: uncharacterized protein (623 aa).

Residues 1-18 (MSSRSGSADTFTQRSDSN) are compositionally biased toward polar residues. Disordered regions lie at residues 1–107 (MSSR…DPFT), 132–181 (LGSD…EIGA), 207–231 (SWNL…ADTD), 298–349 (REET…ESDQ), 384–464 (RKSV…DRNV), 533–553 (SIND…PPET), and 568–623 (VESR…TKGD). Over residues 25–34 (ISLDDVRDNN) the composition is skewed to basic and acidic residues. Residues 39–49 (SSSGISTTGSS) show a composition bias toward low complexity. Over residues 132–144 (LGSDTARPTSNGG) the composition is skewed to polar residues. Residues 165 to 177 (STSTWGPSGPTTP) show a composition bias toward low complexity. Residues 328–339 (EKSTFSRISEQP) are compositionally biased toward polar residues. The span at 400–417 (QTPTISTASSPIQPSSSP) shows a compositional bias: low complexity. Positions 533 to 548 (SINDLQQGTSSSQNQA) are enriched in polar residues. Residues 604–614 (PSASPSTSRTR) show a composition bias toward low complexity.

This is an uncharacterized protein from Emericella nidulans (strain FGSC A4 / ATCC 38163 / CBS 112.46 / NRRL 194 / M139) (Aspergillus nidulans).